A 1822-amino-acid chain; its full sequence is ADP-ribosylation factor guanine nucleotide-exchange factor sec72 (1822 aa).

Disordered stretches follow at residues 1-54 (MQDA…NGMD) and 66-126 (DAVV…RASL). At Ser-44 the chain carries Phosphoserine. The segment covering 72-84 (DINTEDSSLSPAK) has biased composition (polar residues). Residues 85-110 (QENEKSPEGIEQKYQEEDLKDDKKSN) show a composition bias toward basic and acidic residues. 2 positions are modified to phosphoserine: Ser-122 and Ser-125. The short motif at 547 to 551 (NYDCD) is the HUS box element. Position 597 is a phosphothreonine (Thr-597). Ser-653 is subject to Phosphoserine. A Phosphothreonine modification is found at Thr-654. Ser-669 is modified (phosphoserine). The region spanning 701-889 (QFESNKQRKK…GFVYDDILKN (189 aa)) is the SEC7 domain. Residues 898–1106 (ELAAIAPLMN…NARVRRKNVN (209 aa)) are HDS1 domain. Position 1110 is a phosphoserine (Ser-1110). Disordered stretches follow at residues 1111–1131 (NSIR…SLSK) and 1584–1610 (ENEN…TSSI). 2 stretches are compositionally biased toward low complexity: residues 1117-1130 (SGST…RSLS) and 1597-1610 (SLPE…TSSI). Phosphoserine occurs at positions 1606 and 1609.

The protein resides in the cytoplasm. It localises to the golgi apparatus. The protein localises to the trans-Golgi network. Its subcellular location is the cytoplasmic vesicle. It is found in the COPI-coated vesicle membrane. The protein resides in the COPII-coated vesicle membrane. Guanine exchange factor that acts as an activator of arf1 at the trans-Golgi net-work and is thus involved in vesicular budding and traffic between compartments of the Golgi apparatus. Activation of Arf (ADP-ribosylation factor) GTPases is essential for vesicle formation via recruitment of cargo adapters and coat proteins necessary for Golgi trafficking. Involved in the resistance to tamoxifen (TAM), an anticancer drug used to treat estrogen receptor (ER)-positive breast cancer. The polypeptide is ADP-ribosylation factor guanine nucleotide-exchange factor sec72 (Schizosaccharomyces pombe (strain 972 / ATCC 24843) (Fission yeast)).